The sequence spans 181 residues: Der GTPase-activating protein YihI (181 aa).

Disordered regions lie at residues 1–75 and 145–181; these read MSRK…KKIP and EPEA…DYKG. Positions 32 to 43 are enriched in basic residues; sequence RLRKKDKKRKGL. Over residues 146-155 the composition is skewed to acidic residues; it reads PEAEEEFEEE. Residues 156 to 165 show a composition bias toward basic and acidic residues; the sequence is APVRKSRSDD. Residues 166–181 are compositionally biased toward acidic residues; that stretch reads DLLADFEDFDMDDYKG.

It belongs to the YihI family. As to quaternary structure, interacts with Der.

A GTPase-activating protein (GAP) that modifies Der/EngA GTPase function. May play a role in ribosome biogenesis. The protein is Der GTPase-activating protein YihI of Vibrio vulnificus (strain CMCP6).